Here is a 129-residue protein sequence, read N- to C-terminus: Ribosome-binding factor A (129 aa).

This sequence belongs to the RbfA family. As to quaternary structure, monomer. Binds 30S ribosomal subunits, but not 50S ribosomal subunits or 70S ribosomes.

It is found in the cytoplasm. Functionally, one of several proteins that assist in the late maturation steps of the functional core of the 30S ribosomal subunit. Associates with free 30S ribosomal subunits (but not with 30S subunits that are part of 70S ribosomes or polysomes). Required for efficient processing of 16S rRNA. May interact with the 5'-terminal helix region of 16S rRNA. The sequence is that of Ribosome-binding factor A from Actinobacillus succinogenes (strain ATCC 55618 / DSM 22257 / CCUG 43843 / 130Z).